A 346-amino-acid polypeptide reads, in one-letter code: 4-hydroxy-3-methylbut-2-enyl diphosphate reductase (346 aa).

C19 contributes to the [4Fe-4S] cluster binding site. The (2E)-4-hydroxy-3-methylbut-2-enyl diphosphate site is built by H48 and H84. Dimethylallyl diphosphate contacts are provided by H48 and H84. The isopentenyl diphosphate site is built by H48 and H84. Residue C106 coordinates [4Fe-4S] cluster. H134 lines the (2E)-4-hydroxy-3-methylbut-2-enyl diphosphate pocket. H134 provides a ligand contact to dimethylallyl diphosphate. Residue H134 coordinates isopentenyl diphosphate. E136 functions as the Proton donor in the catalytic mechanism. T175 contributes to the (2E)-4-hydroxy-3-methylbut-2-enyl diphosphate binding site. C205 is a binding site for [4Fe-4S] cluster. S233, S234, N235, and S278 together coordinate (2E)-4-hydroxy-3-methylbut-2-enyl diphosphate. Residues S233, S234, N235, and S278 each contribute to the dimethylallyl diphosphate site. S233, S234, N235, and S278 together coordinate isopentenyl diphosphate.

This sequence belongs to the IspH family. [4Fe-4S] cluster serves as cofactor.

It carries out the reaction isopentenyl diphosphate + 2 oxidized [2Fe-2S]-[ferredoxin] + H2O = (2E)-4-hydroxy-3-methylbut-2-enyl diphosphate + 2 reduced [2Fe-2S]-[ferredoxin] + 2 H(+). It catalyses the reaction dimethylallyl diphosphate + 2 oxidized [2Fe-2S]-[ferredoxin] + H2O = (2E)-4-hydroxy-3-methylbut-2-enyl diphosphate + 2 reduced [2Fe-2S]-[ferredoxin] + 2 H(+). It participates in isoprenoid biosynthesis; dimethylallyl diphosphate biosynthesis; dimethylallyl diphosphate from (2E)-4-hydroxy-3-methylbutenyl diphosphate: step 1/1. Its pathway is isoprenoid biosynthesis; isopentenyl diphosphate biosynthesis via DXP pathway; isopentenyl diphosphate from 1-deoxy-D-xylulose 5-phosphate: step 6/6. Its function is as follows. Catalyzes the conversion of 1-hydroxy-2-methyl-2-(E)-butenyl 4-diphosphate (HMBPP) into a mixture of isopentenyl diphosphate (IPP) and dimethylallyl diphosphate (DMAPP). Acts in the terminal step of the DOXP/MEP pathway for isoprenoid precursor biosynthesis. This is 4-hydroxy-3-methylbut-2-enyl diphosphate reductase from Brucella melitensis biotype 1 (strain ATCC 23456 / CCUG 17765 / NCTC 10094 / 16M).